The chain runs to 615 residues: Vitamin B12 transporter BtuB (615 aa).

The signal sequence occupies residues 1–20 (MIKKISLLTALSVTAFSGWA). The TonB box signature appears at 26 to 33 (NAMVVTAN). Residues 38–152 (PVNSVLAPTT…IGGVVNIITT (115 aa)) form the TBDR plug domain. Residues Ser85, Asn92, and 110-111 (IS) each bind cyanocob(III)alamin. The 461-residue stretch at 155-615 (KNGTTLNAGV…EYYLTGSYTF (461 aa)) folds into the TBDR beta-barrel domain. A run of 3 beta stranded transmembrane segments spans residues 158-165 (TTLNAGVG), 169-178 (YQSYDAATQQ), and 184-195 (TTATLAGNYVYT). The Ca(2+) site is built by Asp199, Gln210, Asp212, and Asp214. The next 2 beta stranded transmembrane spans lie at 216–226 (FMSKSLYGTVE) and 231–247 (DQFS…NRTD). Tyr248, Asp249, and Asp255 together coordinate Ca(2+). 14 beta stranded membrane passes run 257-271 (RQLY…LRYQ), 273-290 (GIYS…KDYD), 303-319 (TLVD…NVLQ), 322-331 (AGTVSAGVDW), 347-363 (ESQN…QRFA), 365-375 (IVLEGSVRGDD), 379-394 (FGWH…WEFI), 397-411 (YSLI…KAPN), 429-438 (ESKQWESGVE), 444-453 (VIWRVSGYRN), 468-486 (VYEN…TASF), 490-505 (PVGH…SRNA), 513-525 (RRAK…QLDW), and 531-546 (DWSV…YDKD). Thr303 contacts cyanocob(III)alamin. Residue Arg513 participates in cyanocob(III)alamin binding. Cyanocob(III)alamin is bound at residue Tyr547. Transmembrane regions (beta stranded) follow at residues 559–573 (TVKL…LAAS), 586–597 (IANLFDKDYETA), and 603–615 (AGRE…SYTF). The TonB C-terminal box signature appears at 598-615 (YGYRTAGREYYLTGSYTF).

It belongs to the TonB-dependent receptor family. BtuB (TC 1.B.14.3.1) subfamily.

It is found in the cell outer membrane. Functionally, involved in the active translocation of vitamin B12 (cyanocobalamin) across the outer membrane to the periplasmic space. It derives its energy for transport by interacting with the trans-periplasmic membrane protein TonB. The polypeptide is Vitamin B12 transporter BtuB (Pectobacterium atrosepticum (strain SCRI 1043 / ATCC BAA-672) (Erwinia carotovora subsp. atroseptica)).